The following is a 46-amino-acid chain: U-myrmeciitoxin(01)-Mg6a (46 aa).

The signal sequence occupies residues 1–20 (MNLKTFCFFLLGIFVTLTVT). Positions 21–33 (VIPIANADAEADT) are excised as a propeptide.

Contains 1 disulfide bond. As to expression, expressed by the venom gland.

The protein resides in the secreted. The polypeptide is U-myrmeciitoxin(01)-Mg6a (Myrmecia gulosa (Red bulldog ant)).